A 100-amino-acid chain; its full sequence is Urease subunit gamma (100 aa).

It belongs to the urease gamma subunit family. In terms of assembly, heterotrimer of UreA (gamma), UreB (beta) and UreC (alpha) subunits. Three heterotrimers associate to form the active enzyme.

The protein resides in the cytoplasm. The catalysed reaction is urea + 2 H2O + H(+) = hydrogencarbonate + 2 NH4(+). Its pathway is nitrogen metabolism; urea degradation; CO(2) and NH(3) from urea (urease route): step 1/1. The polypeptide is Urease subunit gamma (Mycobacterium bovis (strain ATCC BAA-935 / AF2122/97)).